We begin with the raw amino-acid sequence, 257 residues long: Uracil phosphoribosyltransferase homolog (257 aa).

GTP-binding positions include Arg-81, Arg-90, and 124–127 (EKGN). Residue Arg-134 participates in 5-phospho-alpha-D-ribose 1-diphosphate binding. 2 residues coordinate GTP: Arg-151 and Arg-180. 186–194 (YPILSTGNT) is a binding site for 5-phospho-alpha-D-ribose 1-diphosphate. 247 to 249 (THF) serves as a coordination point for uracil.

The protein belongs to the UPRTase family.

It localises to the cytoplasm. The protein localises to the nucleus. The polypeptide is Uracil phosphoribosyltransferase homolog (uprt) (Danio rerio (Zebrafish)).